Reading from the N-terminus, the 159-residue chain is Mesogenin-1 (159 aa).

The tract at residues Pro79 to Ser101 is disordered. Basic residues predominate over residues Lys86–Ala100. In terms of domain architecture, bHLH spans Gln95–Leu149.

It localises to the nucleus. Its function is as follows. Involved in specifying the paraxial, but not dorsal, mesoderm. May regulate the expression of T-box transcription factors required for mesoderm formation and differentiation. The chain is Mesogenin-1 (MSGN1) from Gallus gallus (Chicken).